The sequence spans 313 residues: Vacuolar membrane protein ZYRO0A01628g (313 aa).

Positions 22 to 37 (SASKTSSHTSKTSYSA) are enriched in low complexity. The disordered stretch occupies residues 22–48 (SASKTSSHTSKTSYSAVVTPPSSDGNP). Residues 59–79 (GLIYIIVGGTAAAIFAFIILW) traverse the membrane as a helical segment. Positions 221 to 234 (TSLPSASESSSNLL) are enriched in low complexity. Residues 221–313 (TSLPSASESS…LLEGNDDGTT (93 aa)) form a disordered region. A compositionally biased stretch (basic and acidic residues) spans 235 to 247 (DRPERTASPERKP). Basic residues predominate over residues 248–257 (KAYGRYHQRN). Positions 285-301 (NVNNNNKKHGTTPSRFL) are enriched in polar residues.

It belongs to the PRM5 family.

The protein localises to the vacuole membrane. This Zygosaccharomyces rouxii (strain ATCC 2623 / CBS 732 / NBRC 1130 / NCYC 568 / NRRL Y-229) protein is Vacuolar membrane protein ZYRO0A01628g.